The sequence spans 440 residues: tRNA-2-methylthio-N(6)-dimethylallyladenosine synthase (440 aa).

The MTTase N-terminal domain occupies 4-120 (NYVYIETFGC…LNDMVLAAER (117 aa)). The [4Fe-4S] cluster site is built by cysteine 13, cysteine 49, cysteine 83, cysteine 158, cysteine 162, and cysteine 165. The Radical SAM core domain maps to 144–374 (GTARISSFVT…QALQKRTTME (231 aa)). Residues 377 to 439 (DVLLGTRQTV…QNSLLGELLP (63 aa)) form the TRAM domain.

Belongs to the methylthiotransferase family. MiaB subfamily. Monomer. It depends on [4Fe-4S] cluster as a cofactor.

It is found in the cytoplasm. The enzyme catalyses N(6)-dimethylallyladenosine(37) in tRNA + (sulfur carrier)-SH + AH2 + 2 S-adenosyl-L-methionine = 2-methylsulfanyl-N(6)-dimethylallyladenosine(37) in tRNA + (sulfur carrier)-H + 5'-deoxyadenosine + L-methionine + A + S-adenosyl-L-homocysteine + 2 H(+). Functionally, catalyzes the methylthiolation of N6-(dimethylallyl)adenosine (i(6)A), leading to the formation of 2-methylthio-N6-(dimethylallyl)adenosine (ms(2)i(6)A) at position 37 in tRNAs that read codons beginning with uridine. The polypeptide is tRNA-2-methylthio-N(6)-dimethylallyladenosine synthase (Pelobacter propionicus (strain DSM 2379 / NBRC 103807 / OttBd1)).